The primary structure comprises 358 residues: Magnesium-protoporphyrin IX monomethyl ester [oxidative] cyclase 2 (358 aa).

It belongs to the AcsF family. Fe cation is required as a cofactor.

It carries out the reaction Mg-protoporphyrin IX 13-monomethyl ester + 3 NADPH + 3 O2 + 2 H(+) = 3,8-divinyl protochlorophyllide a + 3 NADP(+) + 5 H2O. Its pathway is porphyrin-containing compound metabolism; chlorophyll biosynthesis (light-independent). Its function is as follows. Catalyzes the formation of the isocyclic ring in chlorophyll biosynthesis. Mediates the cyclase reaction, which results in the formation of divinylprotochlorophyllide (Pchlide) characteristic of all chlorophylls from magnesium-protoporphyrin IX 13-monomethyl ester (MgPMME). The polypeptide is Magnesium-protoporphyrin IX monomethyl ester [oxidative] cyclase 2 (Synechocystis sp. (strain ATCC 27184 / PCC 6803 / Kazusa)).